The primary structure comprises 353 residues: Uroporphyrinogen decarboxylase (353 aa).

Substrate-binding positions include 25–29 (RQAGR), aspartate 74, tyrosine 151, serine 206, and histidine 325.

The protein belongs to the uroporphyrinogen decarboxylase family. Homodimer.

It is found in the cytoplasm. The enzyme catalyses uroporphyrinogen III + 4 H(+) = coproporphyrinogen III + 4 CO2. The protein operates within porphyrin-containing compound metabolism; protoporphyrin-IX biosynthesis; coproporphyrinogen-III from 5-aminolevulinate: step 4/4. Catalyzes the decarboxylation of four acetate groups of uroporphyrinogen-III to yield coproporphyrinogen-III. This Chloroherpeton thalassium (strain ATCC 35110 / GB-78) protein is Uroporphyrinogen decarboxylase.